Reading from the N-terminus, the 249-residue chain is Demethylmenaquinone methyltransferase (249 aa).

Residues T67, D87, and 115-116 (DA) contribute to the S-adenosyl-L-methionine site.

It belongs to the class I-like SAM-binding methyltransferase superfamily. MenG/UbiE family.

The enzyme catalyses a 2-demethylmenaquinol + S-adenosyl-L-methionine = a menaquinol + S-adenosyl-L-homocysteine + H(+). Its pathway is quinol/quinone metabolism; menaquinone biosynthesis; menaquinol from 1,4-dihydroxy-2-naphthoate: step 2/2. In terms of biological role, methyltransferase required for the conversion of demethylmenaquinol (DMKH2) to menaquinol (MKH2). This Leptospira interrogans serogroup Icterohaemorrhagiae serovar copenhageni (strain Fiocruz L1-130) protein is Demethylmenaquinone methyltransferase.